The chain runs to 224 residues: Heme response regulator HssR (224 aa).

One can recognise a Response regulatory domain in the interval 3 to 116 (TCLIVDDDPK…ELMFRIKAVL (114 aa)). At Asp-52 the chain carries 4-aspartylphosphate. A DNA-binding region (ompR/PhoB-type) is located at residues 124–222 (NNEVSIGNLT…VRGLGYKVDD (99 aa)).

Phosphorylated by HssS.

It is found in the cytoplasm. Its function is as follows. Member of the two-component regulatory system HssS/HssR involved in intracellular heme homeostasis and tempering of staphylococcal virulence. Phosphorylated HssR binds to a direct repeat sequence within hrtAB promoter and activates the expression of hrtAB, an efflux pump, in response to extracellular heme, hemin, hemoglobin or blood. The sequence is that of Heme response regulator HssR (hssR) from Staphylococcus saprophyticus subsp. saprophyticus (strain ATCC 15305 / DSM 20229 / NCIMB 8711 / NCTC 7292 / S-41).